Consider the following 310-residue polypeptide: Endo-1,4-beta-xylanase B (310 aa).

An N-terminal signal peptide occupies residues 1–19; the sequence is MISLSSVAIALTTVVGALA. The GH11 domain maps to 33–223; that stretch reads AITSSQTGTN…SSGSASMTVS (191 aa). Glu-119 acts as the Nucleophile in catalysis. The active-site Proton donor is the Glu-210. Over residues 218 to 227 the composition is skewed to low complexity; that stretch reads ASMTVSAGSS. The interval 218–274 is disordered; the sequence is ASMTVSAGSSSSGGSGSGSGSGSGSGSGSGSQTTTAGSSTGTGTGSGSGSGSGGSGG. Positions 228–246 are enriched in gly residues; the sequence is SSGGSGSGSGSGSGSGSGS. Positions 247 to 256 are enriched in low complexity; that stretch reads GSQTTTAGSS. The segment covering 257 to 274 has biased composition (gly residues); sequence TGTGTGSGSGSGSGGSGG. One can recognise a CBM1 domain in the interval 275 to 310; sequence NCAAQWGQCGGQGWNGPTCCSSGTCKASNQWYSQCL.

The protein belongs to the glycosyl hydrolase 11 (cellulase G) family.

Its subcellular location is the secreted. It catalyses the reaction Endohydrolysis of (1-&gt;4)-beta-D-xylosidic linkages in xylans.. The protein operates within glycan degradation; xylan degradation. Its function is as follows. Endo-1,4-beta-xylanase involved in the hydrolysis of xylan, a major structural heterogeneous polysaccharide found in plant biomass representing the second most abundant polysaccharide in the biosphere, after cellulose. Hydrolyzes birchwood xylan, beechwood xylan, and oat spelt xylan to produce short-chain xylooligosaccharides, xylopentaose, xylotriose, and xylobiose as the main products. The sequence is that of Endo-1,4-beta-xylanase B (xynB) from Penicillium oxalicum.